Here is a 506-residue protein sequence, read N- to C-terminus: Exopolyphosphatase (506 aa).

Belongs to the GppA/Ppx family. As to quaternary structure, homodimer. Requires Mg(2+) as cofactor.

It localises to the cell membrane. It catalyses the reaction [phosphate](n) + H2O = [phosphate](n-1) + phosphate + H(+). It carries out the reaction [phosphate](n) + ATP = [phosphate](n+1) + ADP. Exopolyphosphatase activity is stimulated by NH(4)(+) and K(+). Phosphotransferase activity is insensitive to the addition of K(+) or NH(4)(+) ions. Degradation of inorganic polyphosphates (polyP). Releases orthophosphate processively from the ends of the polyP chain. Also has polyphosphate:ADP phosphotransferase activity, catalyzing the production of ATP from ADP and polyP. This chain is Exopolyphosphatase, found in Pseudomonas aeruginosa (strain ATCC 15692 / DSM 22644 / CIP 104116 / JCM 14847 / LMG 12228 / 1C / PRS 101 / PAO1).